The chain runs to 483 residues: Proline--tRNA ligase (483 aa).

This sequence belongs to the class-II aminoacyl-tRNA synthetase family. ProS type 3 subfamily. Homodimer.

Its subcellular location is the cytoplasm. The enzyme catalyses tRNA(Pro) + L-proline + ATP = L-prolyl-tRNA(Pro) + AMP + diphosphate. Functionally, catalyzes the attachment of proline to tRNA(Pro) in a two-step reaction: proline is first activated by ATP to form Pro-AMP and then transferred to the acceptor end of tRNA(Pro). This is Proline--tRNA ligase from Natranaerobius thermophilus (strain ATCC BAA-1301 / DSM 18059 / JW/NM-WN-LF).